The following is a 305-amino-acid chain: Regulator of microtubule dynamics protein 1 (305 aa).

An N6-succinyllysine modification is found at K160. TPR repeat units lie at residues 163–199 and 217–253; these read AICISDVGDYEGIKVKIANAYVIKEHFEKAIELNPKD and PWYQRRIAKVLFANPPSSTYEEALRYFHKAEEVDPNF. An N6-succinyllysine modification is found at K245.

It belongs to the RMDN family. As to quaternary structure, interacts with microtubules.

The protein resides in the cytoplasm. It is found in the cytoskeleton. Its subcellular location is the spindle. The protein localises to the spindle pole. This is Regulator of microtubule dynamics protein 1 (Rmdn1) from Mus musculus (Mouse).